The primary structure comprises 340 residues: MLVLAIETSCDETAAALVRDGRSILSSVVSSQVKDHAVYGGVVPEIASRKHLETIPAVIGEALRLADVTLDHVEGVAVTQGPGLAGALLVGLSVAKSIAFARRLPLVGVNHIEAHLAAIFLEREVAYPYLALVVSGGHSHLYRVDGIGRCTTLGQTLDDAAGEAFDKVAKLLGLPYPGGIEIDRLASAGDPDAIAFPRPLLHDGSFNFSFSGLKTAVLSAVKKQGLPEGKSLADFCASFQKAVCHVLVEKTFRAAEAAGIDRVVVAGGVACNSALRREMAHAAAARGVELMIPSPSLCGDNAAMIAVPGDYYLRCGEQGGLALDARVNWPLDLLGSGREG.

Residues histidine 111 and histidine 115 each coordinate Fe cation. Substrate contacts are provided by residues 133 to 137 (VVSGG), aspartate 166, glycine 179, aspartate 183, and asparagine 272. Residue aspartate 300 coordinates Fe cation.

Belongs to the KAE1 / TsaD family. It depends on Fe(2+) as a cofactor.

The protein resides in the cytoplasm. It carries out the reaction L-threonylcarbamoyladenylate + adenosine(37) in tRNA = N(6)-L-threonylcarbamoyladenosine(37) in tRNA + AMP + H(+). Functionally, required for the formation of a threonylcarbamoyl group on adenosine at position 37 (t(6)A37) in tRNAs that read codons beginning with adenine. Is involved in the transfer of the threonylcarbamoyl moiety of threonylcarbamoyl-AMP (TC-AMP) to the N6 group of A37, together with TsaE and TsaB. TsaD likely plays a direct catalytic role in this reaction. This Geobacter sulfurreducens (strain ATCC 51573 / DSM 12127 / PCA) protein is tRNA N6-adenosine threonylcarbamoyltransferase.